We begin with the raw amino-acid sequence, 263 residues long: Glucosamine-6-phosphate deaminase (263 aa).

The Proton acceptor; for enolization step role is filled by D72. The active-site For ring-opening step is D141. H143 acts as the Proton acceptor; for ring-opening step in catalysis. The active-site For ring-opening step is E148.

It belongs to the glucosamine/galactosamine-6-phosphate isomerase family. NagB subfamily.

It catalyses the reaction alpha-D-glucosamine 6-phosphate + H2O = beta-D-fructose 6-phosphate + NH4(+). Its pathway is amino-sugar metabolism; N-acetylneuraminate degradation; D-fructose 6-phosphate from N-acetylneuraminate: step 5/5. Its activity is regulated as follows. Allosterically activated by N-acetylglucosamine 6-phosphate (GlcNAc6P). Functionally, catalyzes the reversible isomerization-deamination of glucosamine 6-phosphate (GlcN6P) to form fructose 6-phosphate (Fru6P) and ammonium ion. The chain is Glucosamine-6-phosphate deaminase from Porphyromonas gingivalis (strain ATCC 33277 / DSM 20709 / CIP 103683 / JCM 12257 / NCTC 11834 / 2561).